Here is a 530-residue protein sequence, read N- to C-terminus: Bifunctional purine biosynthesis protein PurH (530 aa).

The region spanning T2–V150 is the MGS-like domain.

Belongs to the PurH family.

The catalysed reaction is (6R)-10-formyltetrahydrofolate + 5-amino-1-(5-phospho-beta-D-ribosyl)imidazole-4-carboxamide = 5-formamido-1-(5-phospho-D-ribosyl)imidazole-4-carboxamide + (6S)-5,6,7,8-tetrahydrofolate. The enzyme catalyses IMP + H2O = 5-formamido-1-(5-phospho-D-ribosyl)imidazole-4-carboxamide. The protein operates within purine metabolism; IMP biosynthesis via de novo pathway; 5-formamido-1-(5-phospho-D-ribosyl)imidazole-4-carboxamide from 5-amino-1-(5-phospho-D-ribosyl)imidazole-4-carboxamide (10-formyl THF route): step 1/1. It participates in purine metabolism; IMP biosynthesis via de novo pathway; IMP from 5-formamido-1-(5-phospho-D-ribosyl)imidazole-4-carboxamide: step 1/1. The chain is Bifunctional purine biosynthesis protein PurH from Bradyrhizobium diazoefficiens (strain JCM 10833 / BCRC 13528 / IAM 13628 / NBRC 14792 / USDA 110).